Consider the following 246-residue polypeptide: UPF0736 protein Aflv_2136 (246 aa).

This sequence belongs to the UPF0736 family.

In Anoxybacillus flavithermus (strain DSM 21510 / WK1), this protein is UPF0736 protein Aflv_2136.